Reading from the N-terminus, the 401-residue chain is Imidazolonepropionase (401 aa).

Residues histidine 70 and histidine 72 each coordinate Fe(3+). 2 residues coordinate Zn(2+): histidine 70 and histidine 72. Positions 79, 142, and 175 each coordinate 4-imidazolone-5-propanoate. Tyrosine 142 contributes to the N-formimidoyl-L-glutamate binding site. Histidine 238 serves as a coordination point for Fe(3+). Position 238 (histidine 238) interacts with Zn(2+). Glutamine 241 contributes to the 4-imidazolone-5-propanoate binding site. Residue aspartate 313 participates in Fe(3+) binding. Zn(2+) is bound at residue aspartate 313. N-formimidoyl-L-glutamate is bound by residues asparagine 315 and glycine 317. Position 318 (threonine 318) interacts with 4-imidazolone-5-propanoate.

It belongs to the metallo-dependent hydrolases superfamily. HutI family. Zn(2+) serves as cofactor. Fe(3+) is required as a cofactor.

Its subcellular location is the cytoplasm. The catalysed reaction is 4-imidazolone-5-propanoate + H2O = N-formimidoyl-L-glutamate. It functions in the pathway amino-acid degradation; L-histidine degradation into L-glutamate; N-formimidoyl-L-glutamate from L-histidine: step 3/3. Functionally, catalyzes the hydrolytic cleavage of the carbon-nitrogen bond in imidazolone-5-propanoate to yield N-formimidoyl-L-glutamate. It is the third step in the universal histidine degradation pathway. In Acidiphilium cryptum (strain JF-5), this protein is Imidazolonepropionase.